The primary structure comprises 360 residues: Fe(3+) ions import ATP-binding protein FbpC (360 aa).

The ABC transporter domain occupies 4 to 236 (LEIKGLHKHY…PKDRMIAEFL (233 aa)). 36–43 (GPSGCGKT) contacts ATP.

Belongs to the ABC transporter superfamily. Fe(3+) ion importer (TC 3.A.1.10) family. The complex is composed of two ATP-binding proteins (FbpC), two transmembrane proteins (FbpB) and a solute-binding protein (FbpA).

The protein localises to the cell inner membrane. The enzyme catalyses Fe(3+)(out) + ATP + H2O = Fe(3+)(in) + ADP + phosphate + H(+). In terms of biological role, part of the ABC transporter complex FbpABC involved in Fe(3+) ions import. Responsible for energy coupling to the transport system. The sequence is that of Fe(3+) ions import ATP-binding protein FbpC from Mesorhizobium japonicum (strain LMG 29417 / CECT 9101 / MAFF 303099) (Mesorhizobium loti (strain MAFF 303099)).